Reading from the N-terminus, the 379-residue chain is Succinyl-diaminopimelate desuccinylase (379 aa).

H70 lines the Zn(2+) pocket. Residue D72 is part of the active site. D103 serves as a coordination point for Zn(2+). The active-site Proton acceptor is the E137. Positions 138, 166, and 352 each coordinate Zn(2+).

It belongs to the peptidase M20A family. DapE subfamily. As to quaternary structure, homodimer. Zn(2+) is required as a cofactor. Co(2+) serves as cofactor.

The catalysed reaction is N-succinyl-(2S,6S)-2,6-diaminopimelate + H2O = (2S,6S)-2,6-diaminopimelate + succinate. It functions in the pathway amino-acid biosynthesis; L-lysine biosynthesis via DAP pathway; LL-2,6-diaminopimelate from (S)-tetrahydrodipicolinate (succinylase route): step 3/3. In terms of biological role, catalyzes the hydrolysis of N-succinyl-L,L-diaminopimelic acid (SDAP), forming succinate and LL-2,6-diaminopimelate (DAP), an intermediate involved in the bacterial biosynthesis of lysine and meso-diaminopimelic acid, an essential component of bacterial cell walls. In Shewanella baltica (strain OS195), this protein is Succinyl-diaminopimelate desuccinylase.